The following is a 1852-amino-acid chain: Voltage-dependent L-type calcium channel subunit alpha-1S (1852 aa).

The segment at 1 to 23 (MEPPSPQDEGLRKKQPKKPVPEI) is disordered. Residues 1–51 (MEPPSPQDEGLRKKQPKKPVPEILPRPPRALFCLTLQNPLRKACISIVEWK) are Cytoplasmic-facing. An I repeat occupies 38 to 337 (NPLRKACISI…LVLGVLSGEF (300 aa)). Residues 52–70 (PFETIILLTIFANCVALAV) traverse the membrane as a helical segment. The Extracellular portion of the chain corresponds to 71–85 (YLPMPEDDNNTLNLG). N-linked (GlcNAc...) asparagine glycosylation is present at Asn79. Residues 86–106 (LEKLEYFFLIVFSIEAAMKII) traverse the membrane as a helical segment. At 107–115 (AYGFLFHQD) the chain is on the cytoplasmic side. The helical transmembrane segment at 116–136 (AYLRSGWNVLDFIIVFLGVFT) threads the bilayer. Over 137-160 (VILEQVNIIQTNTAPMSSKGAGLD) the chain is Extracellular. The chain crosses the membrane as a helical span at residues 161–179 (VKALRAFRVLRPLRLVSGV). The Cytoplasmic portion of the chain corresponds to 180-196 (PSLQVVLNSIFKAMLPL). A helical transmembrane segment spans residues 197-218 (FHIALLVLFMVIIYAIIGLELF). At 219–279 (KGKMHKTCYF…HGITHFDNFG (61 aa)) the chain is on the extracellular side. 2 cysteine pairs are disulfide-bonded: Cys226-Cys254 and Cys245-Cys261. Asn257 carries an N-linked (GlcNAc...) asparagine glycan. Positions 280–301 (FSMLTVYQCISMEGWTDVLYWV) form an intramembrane region, pore-forming. Positions 290-293 (SMEG) match the Selectivity filter of repeat I motif. Glu292 is a binding site for Ca(2+). The Extracellular segment spans residues 302–309 (NDAIGNEW). The chain crosses the membrane as a helical span at residues 310–330 (PWIYFVTLILLGSFFILNLVL). Residues 331–432 (GVLSGEFTKE…WKCHDLVKSK (102 aa)) are Cytoplasmic-facing. A binding to the beta subunit region spans residues 357–374 (QQLEEDLRGYMSWITQGE). Residues Ser393 and Ser397 each carry the phosphoserine modification. One copy of the II repeat lies at 418–664 (NRVFRWKCHD…VFLAIAVDNL (247 aa)). Residues 433–451 (VFYWLVILIVALNTLSIAS) form a helical membrane-spanning segment. At 452 to 462 (EHHNQPLWLTH) the chain is on the extracellular side. Residues 463–483 (LQDVANRVLLTLFTIEMLMKM) traverse the membrane as a helical segment. Topologically, residues 484 to 494 (YGLGLRQYFMS) are cytoplasmic. The chain crosses the membrane as a helical span at residues 495-514 (IFNRFDCFVVCSGILEILLV). The Extracellular portion of the chain corresponds to 515 to 523 (ESGAMSPLG). Residues 524 to 542 (ISVLRCIRLLRLFKITKYW) traverse the membrane as a helical segment. Over 543-561 (TSLSNLVASLLNSIRSIAS) the chain is Cytoplasmic. A helical membrane pass occupies residues 562 to 581 (LLLLLFLFIIIFALLGMQLF). The Extracellular segment spans residues 582-601 (GGRYDFEDTEVRRSNFDNFP). The pore-forming intramembrane region spans 602 to 623 (QALISVFQVLTGEDWNSVMYNG). The short motif at 612–615 (TGED) is the Selectivity filter of repeat II element. Glu614 is a Ca(2+) binding site. Residues 624–633 (IMAYGGPTYP) are Extracellular-facing. Residues 634–653 (GVLVCIYFIILFVCGNYILL) traverse the membrane as a helical segment. Over 654–799 (NVFLAIAVDN…VLCHRIVNAT (146 aa)) the chain is Cytoplasmic. Disordered regions lie at residues 675-712 (KAKAEERKRRKMSKGLPDKSEEERATVTKKLEQKSKGE) and 731-757 (EVKDPYPSADFPGDDEEDEPEIPVSPR). Phosphoserine; by PKA is present on Ser687. Over residues 690-711 (LPDKSEEERATVTKKLEQKSKG) the composition is skewed to basic and acidic residues. Residues 742–751 (PGDDEEDEPE) show a composition bias toward acidic residues. The stretch at 768-1068 (EKAVPIPEAS…IFVGFVIVTF (301 aa)) is one III repeat. A helical membrane pass occupies residues 800-818 (WFTNFILLFILLSSAALAA). The Extracellular segment spans residues 819–830 (EDPIRADSMRNQ). Residues 831-850 (ILEYFDYVFTAVFTVEIVLK) form a helical membrane-spanning segment. Residues 851–866 (MTTYGAFLHKGSFCRN) lie on the Cytoplasmic side of the membrane. Residues 867 to 885 (YFNILDLLVVAVSLISMGL) traverse the membrane as a helical segment. Over 886–892 (ESSAISV) the chain is Extracellular. A helical transmembrane segment spans residues 893–911 (VKILRVLRVLRPLRAINRA). The Cytoplasmic segment spans residues 912 to 930 (KGLKHVVQCVFVAIRTIGN). Residues 931-950 (IVLVTTLLQFMFACIGVQLF) traverse the membrane as a helical segment. The Extracellular segment spans residues 951–1000 (KGKFYSCNDLSKMTEEECRGYYYIYKDGDPTQIELRPRQWIHNDFHFDNV). Cys957 and Cys968 form a disulfide bridge. The interval 988-1077 (RQWIHNDFHF…FQEQGETEYK (90 aa)) is dihydropyridine binding. An intramembrane region (pore-forming) is located at residues 1001–1021 (LSAMMSLFTVSTFEGWPQLLY). The Selectivity filter of repeat III signature appears at 1012-1015 (TFEG). Glu1014 lines the Ca(2+) pocket. Residues 1022–1038 (KAIDSNEEDTGPVYNNR) are Extracellular-facing. A helical transmembrane segment spans residues 1039-1060 (VEMAIFFIIYIILIAFFMMNIF). The Cytoplasmic portion of the chain corresponds to 1061–1118 (VGFVIVTFQEQGETEYKNCELDKNQRQCVQYALKARPLRCYIPKNPYQYQVWYVVTSS). The IV repeat unit spans residues 1105 to 1384 (NPYQYQVWYV…LFVAVIMDNF (280 aa)). The chain crosses the membrane as a helical span at residues 1119-1140 (YFEYLMFALIMLNTICLGMQHY). Asn1141 carries an N-linked (GlcNAc...) asparagine glycan. Over 1141–1148 (NQSEQMNH) the chain is Extracellular. Residues 1149 to 1170 (ISDILNVAFTIIFTLEMVLKLI) form a helical membrane-spanning segment. Topologically, residues 1171 to 1180 (AFKPRGYFGD) are cytoplasmic. A helical transmembrane segment spans residues 1181-1200 (PWNVFDFLIVIGSIIDVILS). Over 1201-1231 (EIDTFLASSGGLYCLGGGCGNVDPDESARIS) the chain is Extracellular. The helical transmembrane segment at 1232 to 1250 (SAFFRLFRVMRLVKLLNRA) threads the bilayer. The Cytoplasmic segment spans residues 1251 to 1268 (EGVRTLLWTFIKSFQALP). A helical membrane pass occupies residues 1269 to 1289 (YVALLIVMLFFIYAVIGMQMF). Topologically, residues 1290 to 1311 (GKIAMVDGTQINRNNNFQTFPQ) are extracellular. An intramembrane region (pore-forming) is located at residues 1312 to 1330 (AVLLLFRCATGEAWQEILL). Positions 1321–1324 (TGEA) match the Selectivity filter of repeat IV motif. Topologically, residues 1331 to 1356 (ACSYGKLCDPESDYAPGEEHTCGTNF) are extracellular. The interval 1337–1403 (LCDPESDYAP…LGPHHLDEFK (67 aa)) is dihydropyridine binding. Cys1338 and Cys1352 are joined by a disulfide. 2 phenylalkylamine binding regions span residues 1349–1391 (EHTC…TRDW) and 1349–1392 (EHTC…RDWS). The helical transmembrane segment at 1357-1381 (AYYYFISFYMLCAFLIINLFVAVIM) threads the bilayer. The Cytoplasmic portion of the chain corresponds to 1382 to 1852 (DNFDYLTRDW…PEGGAVPWEP (471 aa)). The segment at 1522–1542 (KFYATFLIQEHFRKFMKRQEE) is interaction with calmodulin. Phosphoserine; by PKA and CAMK2 is present on Ser1575. Residue Thr1579 is modified to Phosphothreonine. Ser1617 carries the post-translational modification Phosphoserine; by PKA. 2 disordered regions span residues 1702–1721 (GPLSQPCRASGPHSRSHVDK) and 1727–1762 (TQRGMPEGQVPPSPCQVTGAKAEHPVQKEGKGPTSR). A compositionally biased stretch (basic and acidic residues) spans 1747 to 1757 (KAEHPVQKEGK).

Belongs to the calcium channel alpha-1 subunit (TC 1.A.1.11) family. CACNA1S subfamily. Component of a calcium channel complex consisting of a pore-forming alpha subunit (CACNA1S) and the ancillary subunits CACNB1 or CACNB2, CACNG1 and CACNA2D1. The channel complex contains alpha, beta, gamma and delta subunits in a 1:1:1:1 ratio, i.e. it contains either CACNB1 or CACNB2. CACNA1S channel activity is modulated by the auxiliary subunits (CACNB1 or CACNB2, CACNG1 and CACNA2D1). Interacts with DYSF and JSRP1. Interacts with RYR1. Interacts with STAC, STAC2 and STAC3 (via their SH3 domains). Interacts with CALM. Post-translationally, the alpha-1S subunit is found in two isoforms in the skeletal muscle: a minor form of 212 kDa containing the complete amino acid sequence, and a major form of 190 kDa derived from the full-length form by post-translational proteolysis close to Phe-1690. In terms of processing, phosphorylated. Phosphorylation by PKA activates the calcium channel. Both the minor and major forms are phosphorylated in vitro by PKA. Phosphorylation at Ser-1575 is involved in beta-adrenergic-mediated regulation of the channel.

The protein resides in the cell membrane. It localises to the sarcolemma. The protein localises to the T-tubule. The enzyme catalyses Ca(2+)(in) = Ca(2+)(out). Channel activity is blocked by dihydropyridines (DHP), phenylalkylamines, and by benzothiazepines. Its function is as follows. Pore-forming, alpha-1S subunit of the voltage-gated calcium channel that gives rise to L-type calcium currents in skeletal muscle. Calcium channels containing the alpha-1S subunit play an important role in excitation-contraction coupling in skeletal muscle via their interaction with RYR1, which triggers Ca(2+) release from the sarcplasmic reticulum and ultimately results in muscle contraction. Long-lasting (L-type) calcium channels belong to the 'high-voltage activated' (HVA) group. In Mus musculus (Mouse), this protein is Voltage-dependent L-type calcium channel subunit alpha-1S (Cacna1s).